The sequence spans 110 residues: Thiosulfate sulfurtransferase GlpE (110 aa).

A Rhodanese domain is found at 19–107 (EDSLAVLVDI…WRRQALPIIQ (89 aa)). Cysteine 67 (cysteine persulfide intermediate) is an active-site residue.

Belongs to the GlpE family.

It is found in the cytoplasm. The catalysed reaction is thiosulfate + hydrogen cyanide = thiocyanate + sulfite + 2 H(+). It carries out the reaction thiosulfate + [thioredoxin]-dithiol = [thioredoxin]-disulfide + hydrogen sulfide + sulfite + 2 H(+). In terms of biological role, transferase that catalyzes the transfer of sulfur from thiosulfate to thiophilic acceptors such as cyanide or dithiols. May function in a CysM-independent thiosulfate assimilation pathway by catalyzing the conversion of thiosulfate to sulfite, which can then be used for L-cysteine biosynthesis. This Photobacterium profundum (strain SS9) protein is Thiosulfate sulfurtransferase GlpE.